Here is a 304-residue protein sequence, read N- to C-terminus: MLWELYAFVFAASVVFNFVGIVANLFIIVIISKTWVKSHKISSSDKILFSLAITRFLTLGLFLLNTVYIATNTGRSVYFSTFFLLCWKFLDSNSLWLVTFLNCLYCVKITHFQHPVFLLLKRTVSMKTTSLLLACLLISAFTTLLYFVLTQISRFPEHIIGRNDTLFDVSDGILTLAASLILSSLLQFLLNVTFASLLIHSLRRHVQKMQRNRSSFWNPQTEAHVGAMRLMICFLVLYIPYSIAALLYFPSYMRKNLRAQAACMIITAAYPPGHSILLIITHHKLKAKAKKICCFYKLRDFVSN.

Over 1 to 10 (MLWELYAFVF) the chain is Extracellular. A helical transmembrane segment spans residues 11-31 (AASVVFNFVGIVANLFIIVII). Topologically, residues 32-46 (SKTWVKSHKISSSDK) are cytoplasmic. A helical membrane pass occupies residues 47-67 (ILFSLAITRFLTLGLFLLNTV). The Extracellular segment spans residues 68 to 80 (YIATNTGRSVYFS). A helical membrane pass occupies residues 81–101 (TFFLLCWKFLDSNSLWLVTFL). At 102-128 (NCLYCVKITHFQHPVFLLLKRTVSMKT) the chain is on the cytoplasmic side. The chain crosses the membrane as a helical span at residues 129–149 (TSLLLACLLISAFTTLLYFVL). At 150 to 171 (TQISRFPEHIIGRNDTLFDVSD) the chain is on the extracellular side. Asn163 carries an N-linked (GlcNAc...) asparagine glycan. The helical transmembrane segment at 172–192 (GILTLAASLILSSLLQFLLNV) threads the bilayer. Residues 193–229 (TFASLLIHSLRRHVQKMQRNRSSFWNPQTEAHVGAMR) are Cytoplasmic-facing. The chain crosses the membrane as a helical span at residues 230–250 (LMICFLVLYIPYSIAALLYFP). The Extracellular segment spans residues 251–260 (SYMRKNLRAQ). The chain crosses the membrane as a helical span at residues 261-281 (AACMIITAAYPPGHSILLIIT). The Cytoplasmic segment spans residues 282-304 (HHKLKAKAKKICCFYKLRDFVSN).

The protein belongs to the G-protein coupled receptor T2R family. As to expression, expressed in tongue, stomach and duodenum.

It localises to the membrane. Its subcellular location is the cell projection. It is found in the cilium membrane. Functionally, gustducin-coupled receptor implicated in the perception of bitter compounds in the oral cavity and the gastrointestinal tract. Signals through PLCB2 and the calcium-regulated cation channel TRPM5. In airway epithelial cells, binding of denatonium increases the intracellular calcium ion concentration and stimulates ciliary beat frequency. This Rattus norvegicus (Rat) protein is Taste receptor type 2 member 4.